Consider the following 287-residue polypeptide: MTNKLDGKALAKKIKAELQQKVQSLQIKIGRPPGLAVLMVGDNPASGVYVRNKEKACTQVGITSLGKHFPTQTSQAQLGQVIQKLNQDPQVDGILVQLPLPKHLDSTSLLYQIDPSKDVDGLHPMNLGQLLRGEKGLRSCTPAGVMRLLQEYKIELQGKHAVILGRSILVGKPMALMLLEANSTVTIAHSRSKNLEAITKKADILITAVGRPKMISAEMVKPGAVVIDVGINRVIDEAGNSQLVGDVQFNSVAQVAEYITPVPGGIGPMTVAMLLQNTVERWSTLVE.

NADP(+) is bound by residues 165-167 (GRS), serine 190, and isoleucine 231.

This sequence belongs to the tetrahydrofolate dehydrogenase/cyclohydrolase family. In terms of assembly, homodimer.

The catalysed reaction is (6R)-5,10-methylene-5,6,7,8-tetrahydrofolate + NADP(+) = (6R)-5,10-methenyltetrahydrofolate + NADPH. The enzyme catalyses (6R)-5,10-methenyltetrahydrofolate + H2O = (6R)-10-formyltetrahydrofolate + H(+). It participates in one-carbon metabolism; tetrahydrofolate interconversion. In terms of biological role, catalyzes the oxidation of 5,10-methylenetetrahydrofolate to 5,10-methenyltetrahydrofolate and then the hydrolysis of 5,10-methenyltetrahydrofolate to 10-formyltetrahydrofolate. The protein is Bifunctional protein FolD of Trichodesmium erythraeum (strain IMS101).